The primary structure comprises 344 residues: tRNA N6-adenosine threonylcarbamoyltransferase (344 aa).

2 residues coordinate Fe cation: His-111 and His-115. Residues 134–138 (LVSGG), Asp-167, Gly-180, and Asn-274 each bind substrate. Residue Asp-302 participates in Fe cation binding.

Belongs to the KAE1 / TsaD family. Fe(2+) is required as a cofactor.

The protein resides in the cytoplasm. The enzyme catalyses L-threonylcarbamoyladenylate + adenosine(37) in tRNA = N(6)-L-threonylcarbamoyladenosine(37) in tRNA + AMP + H(+). Functionally, required for the formation of a threonylcarbamoyl group on adenosine at position 37 (t(6)A37) in tRNAs that read codons beginning with adenine. Is involved in the transfer of the threonylcarbamoyl moiety of threonylcarbamoyl-AMP (TC-AMP) to the N6 group of A37, together with TsaE and TsaB. TsaD likely plays a direct catalytic role in this reaction. This Dechloromonas aromatica (strain RCB) protein is tRNA N6-adenosine threonylcarbamoyltransferase.